The chain runs to 333 residues: MSKIGINGFGRIGRLVLRAALDKGAEVVAVNDPFIDVNYMVYLFKYDSTHGRFKGTVAADGGFLVVNGKKITVFCERDPTNINWASAGAEYIVESTGVFTTIDKASAHFKGGAKKVVISAPSADAPMFVCGVNLEAYSPDMKVVSNASCTTNCLAPLAKVIHDNFEIVEGLMTTVHATTATQKTVDGPSGKLWRDGRGAAQNIIPASTGAAKAVGKVIPELNGKLTGMAFRVPTPNVSVVDLTVRLGKSATYDEIKAKVLEASQGPMKGILDYTEEEVVSTDFVGDTHSSVFDAKAGIPLNDKFVKLISWYDNEFGYSNRVIDLIKYMQSKDA.

NAD(+) is bound by residues 11-12, D32, and R77; that span reads RI. D-glyceraldehyde 3-phosphate contacts are provided by residues 148–150, T179, 208–209, and R231; these read SCT and TG. The active-site Nucleophile is the C149. N313 is an NAD(+) binding site.

The protein belongs to the glyceraldehyde-3-phosphate dehydrogenase family. Homotetramer.

It localises to the cytoplasm. It carries out the reaction D-glyceraldehyde 3-phosphate + phosphate + NAD(+) = (2R)-3-phospho-glyceroyl phosphate + NADH + H(+). Its pathway is carbohydrate degradation; glycolysis; pyruvate from D-glyceraldehyde 3-phosphate: step 1/5. The sequence is that of Glyceraldehyde-3-phosphate dehydrogenase (Gapdh) from Glossina morsitans morsitans (Savannah tsetse fly).